The chain runs to 487 residues: Sensor protein CopS (487 aa).

Residues 1-9 (MKPGSLTLR) lie on the Periplasmic side of the membrane. The helical transmembrane segment at 10–30 (LSLLFVVAVAAVLIIVGVAFN) threads the bilayer. Residues 31-136 (ELSRHHFRAL…TASVSLPTAS (106 aa)) are Cytoplasmic-facing. A helical transmembrane segment spans residues 137 to 157 (PPLTAWLVLDVTTHMHFFAML). The Periplasmic segment spans residues 158 to 159 (ER). The chain crosses the membrane as a helical span at residues 160–180 (WFWGVLLASTVLSAALGWLVA). In terms of domain architecture, HAMP spans 181–234 (KNGLRPVARVTQTAASMSAGSLKERIPLEPVPDELRALITAFNSMLGRLDDSFM). Topologically, residues 181 to 487 (KNGLRPVARV…EHETGCHCAG (307 aa)) are cytoplasmic. Residues 242–455 (DIAHELRTPI…LHPHLHAIAC (214 aa)) form the Histidine kinase domain. His-245 is modified (phosphohistidine; by autocatalysis).

The protein localises to the cell inner membrane. It catalyses the reaction ATP + protein L-histidine = ADP + protein N-phospho-L-histidine.. Functionally, member of the two-component regulatory system CopS/CopR. Involved in the activation of copper resistance gene operon copABCD. Specifically recognizes or transduces a signal only in response to copper. This would lead to phosphorylation of CopR in the cytoplasm. CopS/CopR may also regulate chromosomally encoded genes. May also be involved in basic copper metabolism. The protein is Sensor protein CopS (copS) of Pseudomonas syringae pv. tomato.